The primary structure comprises 173 residues: Large ribosomal subunit protein uL16 (173 aa).

It belongs to the universal ribosomal protein uL16 family.

This chain is Large ribosomal subunit protein uL16, found in Methanosarcina mazei (strain ATCC BAA-159 / DSM 3647 / Goe1 / Go1 / JCM 11833 / OCM 88) (Methanosarcina frisia).